Here is a 265-residue protein sequence, read N- to C-terminus: Flagellar brake protein YcgR (265 aa).

The region spanning 135-252 (QRRESYRLET…DETIQRYIFR (118 aa)) is the PilZ domain.

This sequence belongs to the YcgR family. Monomer. Interacts with the flagellar basal bodies.

It is found in the bacterial flagellum basal body. Functionally, acts as a flagellar brake, regulating swimming and swarming in a bis-(3'-5') cyclic diguanylic acid (c-di-GMP)-dependent manner. Binds 1 c-di-GMP dimer per subunit. Increasing levels of c-di-GMP lead to decreased motility. This chain is Flagellar brake protein YcgR, found in Xanthomonas campestris pv. campestris (strain B100).